The sequence spans 276 residues: MAASAGGPGSWSENILEYFLRNSQITAEDGAEITWYHAANHKAQTNEALKSTAHMIEADVLLPSDGSEHSQPIMAHPPETNSDNTLQEWLTEVMKSNKGIKLDFKSLAVVEPSMMLLENVKRHLKRPVWINADILPGPNGNSKVIDAKPFLDTVISFFPDVTFSLGWTTGWHPEKVNEGYSWTMVKEMEYICNELSQPVTFPVRAALVRQSCSQLLWLLKKSNRYSLTIWTGKNDNYSVEDLLYIRDHFDKKQVFYDILEPQNHEFKQAIGIKVNL.

Belongs to the menorin family.

Functionally, essential for survival of retinal photoreceptor cells. In Homo sapiens (Human), this protein is Protein FAM151B (FAM151B).